Reading from the N-terminus, the 92-residue chain is UPF0223 protein SSP1692 (92 aa).

Belongs to the UPF0223 family.

The protein is UPF0223 protein SSP1692 of Staphylococcus saprophyticus subsp. saprophyticus (strain ATCC 15305 / DSM 20229 / NCIMB 8711 / NCTC 7292 / S-41).